The following is a 509-amino-acid chain: ATP synthase subunit beta, mitochondrial (509 aa).

The transit peptide at 1-32 directs the protein to the mitochondrion; the sequence is MVLPRLIPRLSRSAFKVAQANNRVFNAPFRGM. Residue 189-196 coordinates ATP; it reads GAGVGKTV.

In terms of assembly, F-type ATP synthases have 2 components, the catalytic core F(1) and the membrane-embedded component F(0), linked together by a central stalk and a peripheral stalk. The central stalk, also called rotor shaft, is often seen as part of F(1). The peripheral stalk is seen as part of F(0). F(0) contains the membrane channel next to the rotor. F-type ATP synthases form dimers but each monomer functions independently in ATP generation. The dimer consists of 17 different polypeptides: ATP1 (subunit alpha, 3 molecules per monomer, part of F(1)), ATP2 (subunit beta, 3 copies per monomer, part of F(1)), ATP3 (subunit gamma, part of the central stalk), ATP4 (subunit b, part of the peripheral stalk), ATP5/OSCP (subunit 5/OSCP, part of the peripheral stalk), ATP6 (subunit a, part of the peripheral stalk), ATP7 (subunit d, part of the peripheral stalk), ATP8 (subunit 8, part of the peripheral stalk), OLI1 (subunit c, part of the rotor, 10 molecules per monomer), ATP14 (subunit h, part of the peripheral stalk), ATP15 (subunit epsilon, part of the central stalk), ATP16 (subunit delta, part of the central stalk), ATP17 (subunit f, part of the peripheral stalk), ATP18 (subunit i/j, part of the peripheral stalk), ATP19 (subunit k, dimer-specific, at interface between monomers), ATP20 (subunit g, at interface between monomers), TIM11 (subunit e, at interface between monomers).

It is found in the mitochondrion inner membrane. The catalysed reaction is ATP + H2O + 4 H(+)(in) = ADP + phosphate + 5 H(+)(out). Functionally, mitochondrial membrane ATP synthase (F(1)F(0) ATP synthase or Complex V) produces ATP from ADP in the presence of a proton gradient across the membrane which is generated by electron transport complexes of the respiratory chain. F-type ATP synthases consist of two structural domains, F(1) - containing the extramembraneous catalytic core, and F(0) - containing the membrane proton channel, linked together by a central stalk and a peripheral stalk. During catalysis, ATP synthesis in the catalytic domain of F(1) is coupled via a rotary mechanism of the central stalk subunits to proton translocation. Subunits alpha/ATP1 and beta/ATP2 form the catalytic core in F(1). Rotation of the central stalk against the surrounding alpha/ATP1(3)beta/ATP2(3) subunits leads to hydrolysis of ATP in three separate catalytic sites on the beta/ATP2 subunits. In Yarrowia lipolytica (strain CLIB 122 / E 150) (Yeast), this protein is ATP synthase subunit beta, mitochondrial.